Reading from the N-terminus, the 351-residue chain is Phenylacetaldoxime dehydratase (351 aa).

The protein belongs to the heme-containing dehydratase family. Monomer. It depends on heme b as a cofactor.

The catalysed reaction is (Z)-phenylacetaldehyde oxime = phenylacetonitrile + H2O. In terms of biological role, catalyzes the stoichiometric dehydration of Z-phenylacetaldoxime to phenylacetonitrile. Prefers the Z-form of phenylacetaldoxime over its E-isomer. The polypeptide is Phenylacetaldoxime dehydratase (Bacillus sp. (strain OxB-1)).